The sequence spans 242 residues: Uridylate kinase (242 aa).

13 to 16 (KLSG) provides a ligand contact to ATP. Position 55 (Gly-55) interacts with UMP. 2 residues coordinate ATP: Gly-56 and Arg-60. UMP-binding positions include Asp-75 and 136–143 (TGNPFFTT). Thr-163, Tyr-169, and Asp-172 together coordinate ATP.

It belongs to the UMP kinase family. In terms of assembly, homohexamer.

It is found in the cytoplasm. It catalyses the reaction UMP + ATP = UDP + ADP. Its pathway is pyrimidine metabolism; CTP biosynthesis via de novo pathway; UDP from UMP (UMPK route): step 1/1. Its activity is regulated as follows. Inhibited by UTP. Its function is as follows. Catalyzes the reversible phosphorylation of UMP to UDP. The sequence is that of Uridylate kinase from Zymomonas mobilis subsp. mobilis (strain ATCC 31821 / ZM4 / CP4).